The primary structure comprises 128 residues: Large ribosomal subunit protein bL17 (128 aa).

The protein belongs to the bacterial ribosomal protein bL17 family. As to quaternary structure, part of the 50S ribosomal subunit. Contacts protein L32.

In Histophilus somni (strain 129Pt) (Haemophilus somnus), this protein is Large ribosomal subunit protein bL17.